A 341-amino-acid chain; its full sequence is MVTLSPAYLPSDGGTQAASAAPSVEENWVVQPSLTLLVLLLVPCVLLLFFLNCFLLFHRLPAFSLRKRASRRKVGQYPCVRVGHSGQARLEPPYMLSPGVVLREGRLGSDTISQGFEATLALEEGVCGRQNTPQSRGSCCQGGSIPSDQICCSPRPRCATPLPCCAPRRAWNAPAYVKKRLRPKVWKVREDELGSSCELDTRHNHVPPNTPAADNALGVTPKVKFCHTSSTQRKSHVGMVPFTLGGSELLEDPSVIPREDTAEHLDASSSLPGPGLDSDFGVSAGISLHILSSDSDSGSQSWTSGMEWDYYDPCYMRRNRLRRDARHNRHLPMMCSKQYWI.

Topologically, residues M1–L36 are extracellular. A helical transmembrane segment spans residues L37–F57. Over H58–I341 the chain is Cytoplasmic. A VPPNSP motif motif is present at residues V206–P211.

Belongs to the huluwa family. As to quaternary structure, interacts with axin1; leading to promote the tankyrase-mediated degradation of axin. Interacts with axin2; leading to promote the tankyrase-mediated degradation of axin.

It is found in the cell membrane. Functionally, key maternal determinant of the dorsal organizer and body axis formation in vertebrates that acts by promoting stabilization of beta-catenin (ctnnb1). Localizes on the plasma membrane of the future dorsal blastomeres in early blastulas and binds to and promotes the tankyrase-mediated degradation of axin (axin1 and axin2). Axin degradation results in stabilization and nuclear translocation of beta-catenin (ctnnb1) for activating organizer-specific target gene expression. The chain is Protein huluwa from Xenopus laevis (African clawed frog).